A 348-amino-acid chain; its full sequence is GPALPP motifs-containing protein 1 (348 aa).

2 disordered regions span residues 1–163 and 177–317; these read MARD…AKGP and QRMK…DLKV. A2 carries the N-acetylalanine modification. Positions 7–12 match the GPALPP motif 1 motif; it reads GPALPP. Positions 14–27 are enriched in basic and acidic residues; sequence FKERATVEDQERDP. Residue S28 is modified to Phosphoserine. The GPALPP motif 2 motif lies at 32-37; that stretch reads GPALPP. Residues 41–59 show a composition bias toward low complexity; sequence SSSSDSSDSNEDSSSLSEE. Residues 60-69 show a composition bias toward acidic residues; it reads GNQESEEDDA. The GPALPP motif 3 motif lies at 93–98; it reads GPALPP. S106 is subject to Phosphoserine. Residues 108-117 are compositionally biased toward pro residues; that stretch reads PRPIIGPALP. Positions 113 to 118 match the GPALPP motif 4 motif; it reads GPALPP. A phosphoserine mark is found at S138, S143, and S148. Acidic residues predominate over residues 144-154; it reads EEAESGEDEDI. Basic and acidic residues-rich tracts occupy residues 177-195, 235-269, 277-287, and 295-317; these read QRMKEKLTKGDDDSPKPVT, PADRERKAKEIQEARKSLSKKDEENMLSGRDKRLA, ESKRSESLMDI, and KAAEDKNRHQERTPFDRDKDLKV. Glycyl lysine isopeptide (Lys-Gly) (interchain with G-Cter in SUMO2) cross-links involve residues K279 and K316.

The polypeptide is GPALPP motifs-containing protein 1 (Gpalpp1) (Rattus norvegicus (Rat)).